The chain runs to 2147 residues: Non-reducing polyketide synthase albA (2147 aa).

Positions 8–244 are N-terminal acylcarrier protein transacylase domain (SAT); sequence YLFGDQTSDI…VKAPIHGPYH (237 aa). The Ketosynthase family 3 (KS3) domain occupies 375–806; the sequence is CSKIAIIGMS…GGNTAILLED (432 aa). Active-site for beta-ketoacyl synthase activity residues include Cys-547, His-682, and His-724. Residues 912–1232 are malonyl-CoA:ACP transacylase (MAT) domain; sequence FVFTGQGAQY…LSSLHLAGID (321 aa). Ser-1001 serves as the catalytic For acyl/malonyl transferase activity. The interval 1286–1425 is N-terminal hotdog fold; the sequence is HEFLTTAAQK…CTVRFFDCAA (140 aa). The region spanning 1286 to 1598 is the PKS/mFAS DH domain; it reads HEFLTTAAQK…FQGLSRKILD (313 aa). Residues 1290–1603 form a product template (PT) domain region; that stretch reads TTAAQKVIET…RKILDTVLPP (314 aa). His-1326 acts as the Proton acceptor; for dehydratase activity in catalysis. The interval 1452-1598 is C-terminal hotdog fold; it reads DAHRLGRGMV…FQGLSRKILD (147 aa). Catalysis depends on Asp-1511, which acts as the Proton donor; for dehydratase activity. The interval 1608 to 1637 is disordered; it reads KGPARPAASAQKAAPAATSKSRASAPAPAK. Low complexity predominate over residues 1610–1637; the sequence is PARPAASAQKAAPAATSKSRASAPAPAK. Positions 1642–1719 constitute a Carrier 1 domain; sequence PSAPSLVKRA…DFKQFLAPMS (78 aa). The residue at position 1679 (Ser-1679) is an O-(pantetheine 4'-phosphoryl)serine. Residues 1719–1759 form a disordered region; it reads SQGEASDGSTSDPESSSSFNGGSSTDESSAGSPVSSPPNEK. Residues 1724 to 1747 show a composition bias toward low complexity; that stretch reads SDGSTSDPESSSSFNGGSSTDESS. The Carrier 2 domain occupies 1760–1837; it reads IEQHATMKEI…DVEDALGLKP (78 aa). O-(pantetheine 4'-phosphoryl)serine is present on Ser-1797. The claisen cyclase domain stretch occupies residues 1873–2145; that stretch reads SPHPRSTSIL…ELGSFIGNAM (273 aa). The For Claisen cyclase activity role is filled by Ser-1963.

It carries out the reaction 6 malonyl-CoA + acetyl-CoA + 6 H(+) = naphtopyrone YWA1 + 6 CO2 + 7 CoA + H2O. The protein operates within secondary metabolite biosynthesis. Non-reducing polyketide synthase involved in the biosynthesis of bifonsecin B, a dimeric gamma-naphthopyrone. The first step in the biosynthesis of bifonsecin B is the production of gamma-naphthopyrone precursor YWA1 by the non-reducing polyketide synthase albA, via condensation of one acetyl-CoA starter unit with 6 malonyl-CoA units. YWA1 is then methylated by bfoE at position C-6 to yield foncesin which is further methylated at position C-8 by bfoD to produce fonsecin B. A key enzyme in the biosynthetic pathway is the cytochrome P450 monooxygenase bfoB which catalyzes the oxidative dimerization of fonsecin B to bifonsecin B. Bfob also catalyzes the oxidative dimerization of rubrofusarin B into nigerone. The stereoselectivity of bfoB is influenced by the two natural monomeric substrates; homodimerization of fonsecin B yields a stereochemically pure biaryl, M-foncerine B, while rubrofusarin B yields a mixture of enantiomers M- and P-nigerone. The polypeptide is Non-reducing polyketide synthase albA (Aspergillus brasiliensis (strain CBS 101740 / IMI 381727 / IBT 21946)).